The following is a 278-amino-acid chain: Probable septum site-determining protein MinC (278 aa).

It belongs to the MinC family. As to quaternary structure, interacts with MinD and FtsZ.

In terms of biological role, cell division inhibitor that blocks the formation of polar Z ring septums. Rapidly oscillates between the poles of the cell to destabilize FtsZ filaments that have formed before they mature into polar Z rings. Prevents FtsZ polymerization. The polypeptide is Probable septum site-determining protein MinC (Gloeobacter violaceus (strain ATCC 29082 / PCC 7421)).